A 349-amino-acid chain; its full sequence is Nicotinate-nucleotide--dimethylbenzimidazole phosphoribosyltransferase (349 aa).

The Proton acceptor role is filled by Glu318.

Belongs to the CobT family.

The enzyme catalyses 5,6-dimethylbenzimidazole + nicotinate beta-D-ribonucleotide = alpha-ribazole 5'-phosphate + nicotinate + H(+). It participates in nucleoside biosynthesis; alpha-ribazole biosynthesis; alpha-ribazole from 5,6-dimethylbenzimidazole: step 1/2. Its function is as follows. Catalyzes the synthesis of alpha-ribazole-5'-phosphate from nicotinate mononucleotide (NAMN) and 5,6-dimethylbenzimidazole (DMB). The sequence is that of Nicotinate-nucleotide--dimethylbenzimidazole phosphoribosyltransferase from Geobacter sp. (strain M21).